Reading from the N-terminus, the 673-residue chain is UvrABC system protein B (673 aa).

The region spanning 26–183 (EGLEDGLAHQ…RRLAELQYTR (158 aa)) is the Helicase ATP-binding domain. ATP is bound at residue 39–46 (GVTGSGKT). A Beta-hairpin motif is present at residues 92–115 (YYDYYQPEAYVPSSDTFIEKDASV). Residues 431 to 597 (QVDDLLSEIR…GLNKKVVDIL (167 aa)) form the Helicase C-terminal domain. One can recognise a UVR domain in the interval 633-668 (QQKIHELEGQMMQHAQNLEFEEAAQIRDQLHQLREL).

It belongs to the UvrB family. Forms a heterotetramer with UvrA during the search for lesions. Interacts with UvrC in an incision complex.

The protein localises to the cytoplasm. The UvrABC repair system catalyzes the recognition and processing of DNA lesions. A damage recognition complex composed of 2 UvrA and 2 UvrB subunits scans DNA for abnormalities. Upon binding of the UvrA(2)B(2) complex to a putative damaged site, the DNA wraps around one UvrB monomer. DNA wrap is dependent on ATP binding by UvrB and probably causes local melting of the DNA helix, facilitating insertion of UvrB beta-hairpin between the DNA strands. Then UvrB probes one DNA strand for the presence of a lesion. If a lesion is found the UvrA subunits dissociate and the UvrB-DNA preincision complex is formed. This complex is subsequently bound by UvrC and the second UvrB is released. If no lesion is found, the DNA wraps around the other UvrB subunit that will check the other stand for damage. The sequence is that of UvrABC system protein B from Klebsiella pneumoniae subsp. pneumoniae (strain ATCC 700721 / MGH 78578).